The chain runs to 428 residues: Ribulose bisphosphate carboxylase (428 aa).

K151 functions as the Proton acceptor in the catalytic mechanism. Position 153 (K153) interacts with substrate. 3 residues coordinate Mg(2+): K177, D179, and E180. An N6-carboxylysine modification is found at K177. H270 functions as the Proton acceptor in the catalytic mechanism. Substrate-binding positions include R271, H303, 354-356 (SGG), and 376-379 (QFGG).

This sequence belongs to the RuBisCO large chain family. Type III subfamily. Homodimer or homodecamer. In contrast to form I RuBisCO, the form III RuBisCO is composed solely of large subunits. Requires Mg(2+) as cofactor.

It carries out the reaction 2 (2R)-3-phosphoglycerate + 2 H(+) = D-ribulose 1,5-bisphosphate + CO2 + H2O. The enzyme catalyses D-ribulose 1,5-bisphosphate + O2 = 2-phosphoglycolate + (2R)-3-phosphoglycerate + 2 H(+). In terms of biological role, catalyzes the addition of molecular CO(2) and H(2)O to ribulose 1,5-bisphosphate (RuBP), generating two molecules of 3-phosphoglycerate (3-PGA). Functions in an archaeal AMP degradation pathway, together with AMP phosphorylase and R15P isomerase. This is Ribulose bisphosphate carboxylase from Methanosarcina mazei (strain ATCC BAA-159 / DSM 3647 / Goe1 / Go1 / JCM 11833 / OCM 88) (Methanosarcina frisia).